The following is a 421-amino-acid chain: 5-hydroxytryptamine receptor 2 (421 aa).

At 1–21 (MLCGRLRHTMNSTTCFFSHRT) the chain is on the extracellular side. A glycan (N-linked (GlcNAc...) asparagine) is linked at N11. A helical membrane pass occupies residues 22 to 42 (VLIGIVGSLIIAVSVVGNVLV). The Cytoplasmic segment spans residues 43-59 (CLAIFTEPILSHSKSKF). Residues 60 to 79 (FIVSLAVADLLLALLVMTFA) traverse the membrane as a helical segment. Residues 80–95 (LVNSLYGYWLFGETFC) are Extracellular-facing. Cysteines 95 and 210 form a disulfide. The helical transmembrane segment at 96–118 (FIWMSADVMCETASIFSICVISY) threads the bilayer. Residues 119-138 (NRLKQVQKPLQYEEFMTTTR) are Cytoplasmic-facing. The chain crosses the membrane as a helical span at residues 139-160 (ALLIIASLWICSFVVSFVPFFL). The Extracellular portion of the chain corresponds to 161–213 (EWHELSMEEIKTIFKDLISDKVKTSDAHTFSFALEQTLGDNRTSNPKPECLFD). A helical membrane pass occupies residues 214–234 (VHFIYSVIYSLFCFYIPCTLM). Over 235–274 (LRNYLRLFLIAKKHHVRIKNLHRLHRNQGTQGSKAARTLT) the chain is Cytoplasmic. The helical transmembrane segment at 275 to 295 (IITGTFLACWLPFFIINPIEA) threads the bilayer. The Extracellular segment spans residues 296-304 (VDEHLIPLE). The helical transmembrane segment at 305 to 325 (CFMVTIWLGYFNSCVNPIIYG) threads the bilayer. Topologically, residues 326-421 (TSNSKFRAAF…MLSESDTVFS (96 aa)) are cytoplasmic.

This sequence belongs to the G-protein coupled receptor 1 family. As to expression, central nervous system.

Its subcellular location is the cell membrane. In terms of biological role, this is one of the several different receptors for 5-hydroxytryptamine (serotonin). 5-HT plays important roles in various behavioral and physiological processes in aplysia. These include feeding, locomotion, circadian rhythm, learning and memory, synaptic plasticity, and synaptic growth. This receptor is mediated by G proteins that stimulate phospholipase C. This is 5-hydroxytryptamine receptor 2 (5HTB2) from Aplysia californica (California sea hare).